Reading from the N-terminus, the 20-residue chain is Non-specific lipid-transfer protein (20 aa).

This sequence belongs to the plant LTP family.

Its function is as follows. Plant non-specific lipid-transfer proteins transfer phospholipids as well as galactolipids across membranes. May play a role in wax or cutin deposition in the cell walls of expanding epidermal cells and certain secretory tissues. The protein is Non-specific lipid-transfer protein of Citrus sinensis (Sweet orange).